A 349-amino-acid chain; its full sequence is Probable dual-specificity RNA methyltransferase RlmN (349 aa).

Glu94 acts as the Proton acceptor in catalysis. The region spanning 100 to 321 (DEDRATLCVS…TQHGVFATIR (222 aa)) is the Radical SAM core domain. A disulfide bridge connects residues Cys107 and Cys332. [4Fe-4S] cluster contacts are provided by Cys114, Cys118, and Cys121. S-adenosyl-L-methionine is bound by residues 159–160 (GE), Ser191, 213–215 (SMH), and His289. Cys332 serves as the catalytic S-methylcysteine intermediate.

Belongs to the radical SAM superfamily. RlmN family. Requires [4Fe-4S] cluster as cofactor.

The protein resides in the cytoplasm. It catalyses the reaction adenosine(2503) in 23S rRNA + 2 reduced [2Fe-2S]-[ferredoxin] + 2 S-adenosyl-L-methionine = 2-methyladenosine(2503) in 23S rRNA + 5'-deoxyadenosine + L-methionine + 2 oxidized [2Fe-2S]-[ferredoxin] + S-adenosyl-L-homocysteine. The catalysed reaction is adenosine(37) in tRNA + 2 reduced [2Fe-2S]-[ferredoxin] + 2 S-adenosyl-L-methionine = 2-methyladenosine(37) in tRNA + 5'-deoxyadenosine + L-methionine + 2 oxidized [2Fe-2S]-[ferredoxin] + S-adenosyl-L-homocysteine. Specifically methylates position 2 of adenine 2503 in 23S rRNA and position 2 of adenine 37 in tRNAs. This chain is Probable dual-specificity RNA methyltransferase RlmN, found in Phocaeicola vulgatus (strain ATCC 8482 / DSM 1447 / JCM 5826 / CCUG 4940 / NBRC 14291 / NCTC 11154) (Bacteroides vulgatus).